Here is a 222-residue protein sequence, read N- to C-terminus: Cytidylate kinase (222 aa).

Position 7–15 (7–15 (GPSASGKST)) interacts with ATP.

It belongs to the cytidylate kinase family. Type 1 subfamily.

The protein localises to the cytoplasm. It carries out the reaction CMP + ATP = CDP + ADP. The catalysed reaction is dCMP + ATP = dCDP + ADP. The chain is Cytidylate kinase from Aquifex aeolicus (strain VF5).